The primary structure comprises 610 residues: Zinc metalloproteinase-disintegrin-like VAP1 (610 aa).

Residues 1–20 form the signal peptide; it reads MIQVLLVTISLAVFPYQGSS. A propeptide spanning residues 21–189 is cleaved from the precursor; it reads VILESGNVND…KKASQSNLTP (169 aa). Residue Glu-190 is modified to Pyrrolidone carboxylic acid (Glu). Positions 199–395 constitute a Peptidase M12B domain; it reads KYVKLFLVAD…NMPQCILKKP (197 aa). Asn-218 carries an N-linked (GlcNAc...) asparagine glycan. 3 disulfides stabilise this stretch: Cys-310–Cys-390, Cys-350–Cys-374, and Cys-352–Cys-357. Position 335 (His-335) interacts with Zn(2+). The Metal-binding motif lies at 335-346; sequence HEMGHNLGMDHD. Catalysis depends on Glu-336, which acts as the Proton acceptor. Positions 339 and 345 each coordinate Zn(2+). A Disintegrin domain is found at 403-488; sequence PAVCGNYFVE…AECTDRFQRN (86 aa). Positions 405, 408, 410, 412, 415, and 418 each coordinate Ca(2+). Intrachain disulfides connect Cys-406-Cys-435, Cys-417-Cys-430, Cys-419-Cys-425, Cys-429-Cys-452, Cys-443-Cys-449, Cys-448-Cys-474, Cys-461-Cys-481, Cys-468-Cys-499, Cys-492-Cys-504, Cys-511-Cys-561, Cys-526-Cys-572, Cys-539-Cys-549, Cys-556-Cys-598, and Cys-592-Cys-603. Positions 467–469 match the D/ECD-tripeptide motif; that stretch reads ECD. 5 residues coordinate Ca(2+): Asp-469, Met-470, Asp-472, Asp-483, and Arg-484.

The protein belongs to the venom metalloproteinase (M12B) family. P-III subfamily. P-IIIc sub-subfamily. Homodimer; disulfide-linked. It depends on Zn(2+) as a cofactor. In terms of processing, the N-terminus is blocked. Expressed by the venom gland.

The protein localises to the secreted. With respect to regulation, inhibited by EDTA and EGTA, but not by PMSF. Functionally, zinc metalloprotease that has fibrinogenolytic and hemorrhagic activities. It induces apoptosis in vascular endothelial cells (VEC), without degrading extracellular matrix (it cannot cleave collagen) or inhibiting adhesion of VEC. VAP1-induced apoptosis is inhibited by antibodies for integrin alpha-3, alpha-6, beta-1 and CD9. Apoptosis is accompanied by severe cell fragmentation, which is controlled by caspases. This is Zinc metalloproteinase-disintegrin-like VAP1 from Crotalus atrox (Western diamondback rattlesnake).